The sequence spans 241 residues: Sugar fermentation stimulation protein homolog (241 aa).

This sequence belongs to the SfsA family.

This is Sugar fermentation stimulation protein homolog from Halorhodospira halophila (strain DSM 244 / SL1) (Ectothiorhodospira halophila (strain DSM 244 / SL1)).